The sequence spans 385 residues: Succinate--CoA ligase [ADP-forming] subunit beta (385 aa).

The region spanning lysine 9–arginine 244 is the ATP-grasp domain. ATP is bound by residues lysine 46, glycine 53–glycine 55, glutamate 99, cysteine 102, and glutamate 107. Mg(2+) is bound by residues asparagine 199 and aspartate 213. Residues asparagine 264 and glycine 321–methionine 323 each bind substrate.

This sequence belongs to the succinate/malate CoA ligase beta subunit family. Heterotetramer of two alpha and two beta subunits. It depends on Mg(2+) as a cofactor.

It carries out the reaction succinate + ATP + CoA = succinyl-CoA + ADP + phosphate. The enzyme catalyses GTP + succinate + CoA = succinyl-CoA + GDP + phosphate. The protein operates within carbohydrate metabolism; tricarboxylic acid cycle; succinate from succinyl-CoA (ligase route): step 1/1. Functionally, succinyl-CoA synthetase functions in the citric acid cycle (TCA), coupling the hydrolysis of succinyl-CoA to the synthesis of either ATP or GTP and thus represents the only step of substrate-level phosphorylation in the TCA. The beta subunit provides nucleotide specificity of the enzyme and binds the substrate succinate, while the binding sites for coenzyme A and phosphate are found in the alpha subunit. The sequence is that of Succinate--CoA ligase [ADP-forming] subunit beta from Rickettsia bellii (strain OSU 85-389).